Consider the following 480-residue polypeptide: Methylenetetrahydrofolate--tRNA-(uracil-5-)-methyltransferase TrmFO (480 aa).

Position 15-20 (15-20 (GGGLAG)) interacts with FAD.

It belongs to the MnmG family. TrmFO subfamily. It depends on FAD as a cofactor.

It localises to the cytoplasm. It catalyses the reaction uridine(54) in tRNA + (6R)-5,10-methylene-5,6,7,8-tetrahydrofolate + NADH + H(+) = 5-methyluridine(54) in tRNA + (6S)-5,6,7,8-tetrahydrofolate + NAD(+). The catalysed reaction is uridine(54) in tRNA + (6R)-5,10-methylene-5,6,7,8-tetrahydrofolate + NADPH + H(+) = 5-methyluridine(54) in tRNA + (6S)-5,6,7,8-tetrahydrofolate + NADP(+). Its function is as follows. Catalyzes the folate-dependent formation of 5-methyl-uridine at position 54 (M-5-U54) in all tRNAs. This Caulobacter sp. (strain K31) protein is Methylenetetrahydrofolate--tRNA-(uracil-5-)-methyltransferase TrmFO.